A 112-amino-acid polypeptide reads, in one-letter code: Iron-sulfur cluster assembly protein CyaY (112 aa).

The protein belongs to the frataxin family.

Its function is as follows. Involved in iron-sulfur (Fe-S) cluster assembly. May act as a regulator of Fe-S biogenesis. The polypeptide is Iron-sulfur cluster assembly protein CyaY (Herminiimonas arsenicoxydans).